The following is a 763-amino-acid chain: Phosphoglycerol transferase I (763 aa).

The next 4 membrane-spanning stretches (helical) occupy residues 4–19, 26–48, 76–98, and 105–127; these read LLSF…IYAW, WWFA…LFAS, YILP…GWIL, and PHHF…ASPA.

Belongs to the OpgB family.

It is found in the cell inner membrane. It catalyses the reaction a phosphatidylglycerol + a membrane-derived-oligosaccharide D-glucose = a 1,2-diacyl-sn-glycerol + a membrane-derived-oligosaccharide 6-(glycerophospho)-D-glucose.. It participates in glycan metabolism; osmoregulated periplasmic glucan (OPG) biosynthesis. Transfers a phosphoglycerol residue from phosphatidylglycerol to the membrane-bound nascent glucan backbones. This is Phosphoglycerol transferase I from Escherichia coli O6:H1 (strain CFT073 / ATCC 700928 / UPEC).